The primary structure comprises 93 residues: Small ribosomal subunit protein bS20c (93 aa).

Belongs to the bacterial ribosomal protein bS20 family.

The protein localises to the plastid. It is found in the chloroplast. Functionally, binds directly to 16S ribosomal RNA. The chain is Small ribosomal subunit protein bS20c from Phaeodactylum tricornutum (strain CCAP 1055/1).